The primary structure comprises 179 residues: Large ribosomal subunit protein uL5 (179 aa).

Belongs to the universal ribosomal protein uL5 family. In terms of assembly, part of the 50S ribosomal subunit; part of the 5S rRNA/L5/L18/L25 subcomplex. Contacts the 5S rRNA and the P site tRNA. Forms a bridge to the 30S subunit in the 70S ribosome.

Functionally, this is one of the proteins that bind and probably mediate the attachment of the 5S RNA into the large ribosomal subunit, where it forms part of the central protuberance. In the 70S ribosome it contacts protein S13 of the 30S subunit (bridge B1b), connecting the 2 subunits; this bridge is implicated in subunit movement. Contacts the P site tRNA; the 5S rRNA and some of its associated proteins might help stabilize positioning of ribosome-bound tRNAs. This chain is Large ribosomal subunit protein uL5, found in Thermoanaerobacter sp. (strain X514).